A 305-amino-acid chain; its full sequence is Transcriptional activator protein PfeR (305 aa).

The Response regulatory domain maps to 79-192 (RLLLVEDDPR…ELDARTDALL (114 aa)). Position 128 is a 4-aspartylphosphate (D128). Positions 200-301 (LPLAQRRDTR…VRGQGYLLVE (102 aa)) form a DNA-binding region, ompR/PhoB-type.

Post-translationally, phosphorylated by PfeS.

It is found in the cytoplasm. In terms of biological role, member of the two-component regulatory system PfeR/PfeS. Activates expression of the ferric enterobactin receptor. The sequence is that of Transcriptional activator protein PfeR (pfeR) from Pseudomonas aeruginosa (strain ATCC 15692 / DSM 22644 / CIP 104116 / JCM 14847 / LMG 12228 / 1C / PRS 101 / PAO1).